We begin with the raw amino-acid sequence, 393 residues long: Geranylgeranyl pyrophosphate synthase 2 (393 aa).

Positions 109, 112, and 141 each coordinate isopentenyl diphosphate. Residues D148 and D152 each coordinate Mg(2+). A dimethylallyl diphosphate-binding site is contributed by R157. R158 provides a ligand contact to isopentenyl diphosphate. Positions 235, 236, and 275 each coordinate dimethylallyl diphosphate. D278 serves as a coordination point for Mg(2+). The dimethylallyl diphosphate site is built by N282, K292, and K302.

It belongs to the FPP/GGPP synthase family. The cofactor is Mg(2+).

It catalyses the reaction isopentenyl diphosphate + dimethylallyl diphosphate = (2E)-geranyl diphosphate + diphosphate. It carries out the reaction isopentenyl diphosphate + (2E)-geranyl diphosphate = (2E,6E)-farnesyl diphosphate + diphosphate. The catalysed reaction is isopentenyl diphosphate + (2E,6E)-farnesyl diphosphate = (2E,6E,10E)-geranylgeranyl diphosphate + diphosphate. It functions in the pathway plant hormone biosynthesis; gibberellin biosynthesis. Its function is as follows. Geranylgeranyl pyrophosphate synthase; part of the gene cluster that mediates the biosynthesis of gibberellins (GAs), diterpenoids that may provide a selective advantage during infection of the preferred host plant, rice. Gibberellins (GAs) are diterpenoids and are synthesized via the mevalonate pathway. Biosynthesis of the major metabolite GA3 (gibberellic acid) from geranylgeranyl diphosphate (GGPP) requires 13 steps. The GGPP produced by the geranylgeranyl diphosphate synthase GGS2 is converted to ent-kaurene via ent-copalyldiphosphate in a two-step cyclization reaction performed by the bifunctional ent-copalyl diphosphate synthase/ent-kaurene synthase enzyme (CPS/KS). Ent-Kaurene is metabolized to GAs by a series of oxidation reactions catalyzed by cytochrome P450 monooxygenases. Cytochrome P450 monooxygenase P450-4 is an ent-kaurene oxidase that catalyzes the three oxidation steps between ent-kaurene and ent-kaurenoic acid. The highly multifunctional cytochrome P450 monooxygenase P450-1 then catalyzes four steps involving oxidation at two carbon atoms, in the main pathway from ent-kaurenoic acid to GA14 via GA12-aldehyde as well as producing kaurenolides and fujenoic acids as by-products. The cytochrome P450 monooxygenase P450-2 then converts GA14 to GA4 by removal of C-20. GA4 is further converted to GA7 by the GA4 desaturase DES via 1,2-desaturation before cytochrome P450 monooxygenase P450-3, a 13-hydroxylase, hydroxylates GA7 to GA3, the final product of the GA-biosynthetic pathway. The sequence is that of Geranylgeranyl pyrophosphate synthase 2 from Gibberella fujikuroi (strain CBS 195.34 / IMI 58289 / NRRL A-6831) (Bakanae and foot rot disease fungus).